The sequence spans 156 residues: MSRRNAAVKRPILPDPQFNSRLASMMVARLMKHGKKSTAQRILSDAFGLIGERTGADPLEVFETAVRNSTPLVEVRARRVGGATYQVPMEVRQERGTAMALRWLVNFSRSRGGRSMAQKLAGELMDAANEAGSAVRKREETHKMAEANKAFAHYRY.

This sequence belongs to the universal ribosomal protein uS7 family. As to quaternary structure, part of the 30S ribosomal subunit. Contacts proteins S9 and S11.

One of the primary rRNA binding proteins, it binds directly to 16S rRNA where it nucleates assembly of the head domain of the 30S subunit. Is located at the subunit interface close to the decoding center, probably blocks exit of the E-site tRNA. This is Small ribosomal subunit protein uS7 from Synechococcus sp. (strain RCC307).